Here is a 360-residue protein sequence, read N- to C-terminus: G-protein coupled receptor 15 (360 aa).

Residues 1–33 (MDPEETSVYLDYYYATSPNSDIRETHSHVPYTS) lie on the Extracellular side of the membrane. The helical transmembrane segment at 34–54 (VFLPVFYTAVFLTGVLGNLVL) threads the bilayer. At 55–69 (MGALHFKPGSRRLID) the chain is on the cytoplasmic side. A helical membrane pass occupies residues 70-90 (IFIINLAASDFIFLVTLPLWV). The Extracellular portion of the chain corresponds to 91-120 (DKEASLGLWRTGSFLCKGSSYMISVNMHCS). A helical membrane pass occupies residues 121-141 (VLLLTCMSVDRYLAIVWPVVS). Topologically, residues 142–149 (RKFRRTDC) are cytoplasmic. Residues 150–170 (AYVVCASIWFISCLLGLPTLL) traverse the membrane as a helical segment. The Extracellular portion of the chain corresponds to 171 to 192 (SRELTLIDDKPYCAEKKATPIK). Residues 193-213 (LIWSLVALIFTFFVPLLSIVT) form a helical membrane-spanning segment. Residues 214 to 239 (CYCCIARKLCAHYQQSGKHNKKLKKS) lie on the Cytoplasmic side of the membrane. The chain crosses the membrane as a helical span at residues 240-260 (IKIIFIVVAAFLVSWLPFNTF). The Extracellular segment spans residues 261 to 284 (KFLAIVSGLRQEHYLPSAILQLGM). A helical membrane pass occupies residues 285–305 (EVSGPLAFANSCVNPFIYYIF). The Cytoplasmic portion of the chain corresponds to 306–360 (DSYIRRAIVHCLCPCLKNYDFGSSTETSDSHLTKALSTFIHAEDFARRRKRSVSL). Serine 359 is subject to Phosphoserine.

This sequence belongs to the G-protein coupled receptor 1 family. Interacts with adapter YWHAE; this interaction promotes ER-to-Golgi transport of GPR15. Interacts with GNAI1; this interaction initiates the signaling pathway. In terms of processing, phosphorylation is necessary for YWHAE binding and efficient surface expression. Post-translationally, O-glycosylated. Sialylated O-glycans in the N-terminal tail inhibits binding of GPR15LG. Sulfation is required for efficient binding of GPR15LG. Highly expressed in lymphoid tissues, including macrophages and peripheral blood mononuclear cells.

The protein resides in the cell membrane. G protein-coupled receptor that plays an important role in immune homeostasis. Acts via its natural ligand GPR15LG, a chemokine-like polypeptide strongly expressed in gastrointestinal tissues. GPR15-GPR15LG signaling axis regulates intestinal homeostasis and inflammation through the migration of immune cells. Controls thereby the specific homing of T-cells, particularly FOXP3+ regulatory T-cells (Tregs), to the large intestine lamina propria. Also required for skin localization of thymus-derived dendritic epidermal T-cells. Plays an important role in mediating cytoprotective function as well as angiogenesis of thrombomodulin. Mechanistically, preferentially signals through the Gi/o pathway to inhibit adenylate cyclase activity and activate a phosphatidylinositol-calcium second messenger system that regulates the release of Ca(2+) ions from intracellular stores. In terms of biological role, (Microbial infection) Acts as an alternative coreceptor with CD4 for HIV-1 infection. The sequence is that of G-protein coupled receptor 15 (GPR15) from Homo sapiens (Human).